Here is a 674-residue protein sequence, read N- to C-terminus: Secretin GspD (674 aa).

Positions 1–24 are cleaved as a signal peptide; sequence MKYWLKKSSWLLAGSLLSTPLAMA. The N0 stretch occupies residues 25 to 121; sequence NEFSASFKGT…VLSGEERANG (97 aa). The segment at 123 to 187 is N1; that stretch reads EVITQVVAVK…EIIRRVDQAG (65 aa). The segment at 188-261 is N2; it reads DKEIEVVELN…LIKQLDVEMA (74 aa). Positions 264–338 are N3; the sequence is GNNRVVYLKY…AMLEVIGQLD (75 aa). A secretin region spans residues 343–612; the sequence is QVLIEALIVE…VFIKPTIIRD (270 aa). The interval 395–417 is cap gate; it reads DTTQTKAVYDTNNNFLRNETTTT. Residues 614–674 are s domain; the sequence is VTADGITQRK…AFIEQMEAKQ (61 aa).

Belongs to the bacterial secretin family. GSP D subfamily. As to quaternary structure, forms a cylindrical channel with 15 subunits; unlike E.coli no 16-subunit channels are seen. The closed pentadeacameric channels are 195 Angstroms long and 145 Angstroms in diameter. Each subunit turns in a clock-wise manner around the channel.

It is found in the cell outer membrane. Its function is as follows. Involved in a type II secretion system (T2SS, formerly general secretion pathway, GSP) for the export of proteins. Required for secretion of cholera toxin through the outer membrane. This subunit forms the outer membrane channel. This chain is Secretin GspD (epsD), found in Vibrio cholerae serotype O1 (strain ATCC 39315 / El Tor Inaba N16961).